The primary structure comprises 390 residues: Phosphoglycerate kinase (390 aa).

Residues 21–23, arginine 36, 59–62, arginine 114, and arginine 147 contribute to the substrate site; these read DLN and HLGR. ATP contacts are provided by residues lysine 198, glutamate 314, and 340–343; that span reads GGDT.

This sequence belongs to the phosphoglycerate kinase family. In terms of assembly, monomer.

It localises to the cytoplasm. It catalyses the reaction (2R)-3-phosphoglycerate + ATP = (2R)-3-phospho-glyceroyl phosphate + ADP. The protein operates within carbohydrate degradation; glycolysis; pyruvate from D-glyceraldehyde 3-phosphate: step 2/5. This is Phosphoglycerate kinase (pgk) from Buchnera aphidicola subsp. Acyrthosiphon pisum (strain APS) (Acyrthosiphon pisum symbiotic bacterium).